We begin with the raw amino-acid sequence, 445 residues long: MNHERSRGLYDRALSVMPGGVNSSVRATMPHPFFIERGDGGHVIDADGNRYVDWVMGYGPLLYGHDLPDPVQAAIQSHVAAGPMYGAPTEIEVEHAEFVARHVPSVESIRFVNSGTEATVSAVRLARGHTGRDKIVVMQGGYHGAQESTLVEGSPGDAHPSTKGIPESFAEHTLPIPFNDPQAAKKVFAEHGDDIAAVLVEPILANMGIVTPIDGYHETLRDLCDDHDSLLVFDEVITGFRVGGLGCAQSKFGVTPDVTTFGKIIGGGFPVGAIGGQAEIIEEFTPAGDVFQSGTFSGHPVTMAAGKASLEYAAENDVYEHVNRLGRKLREGITEICTERAPEYTVVGTDSMFKTIFTRDAPDDPDACCAGGCRQNPDCDRYDTCPKNGADVARAATDRWERVFWQEMKEQGVFLTANQFECQFTSYAHTEEDVEETLAAYREAI.

N6-(pyridoxal phosphate)lysine is present on lysine 263.

It belongs to the class-III pyridoxal-phosphate-dependent aminotransferase family. HemL subfamily. Pyridoxal 5'-phosphate serves as cofactor.

It localises to the cytoplasm. It catalyses the reaction (S)-4-amino-5-oxopentanoate = 5-aminolevulinate. It functions in the pathway porphyrin-containing compound metabolism; protoporphyrin-IX biosynthesis; 5-aminolevulinate from L-glutamyl-tRNA(Glu): step 2/2. This chain is Glutamate-1-semialdehyde 2,1-aminomutase, found in Halorubrum lacusprofundi (strain ATCC 49239 / DSM 5036 / JCM 8891 / ACAM 34).